The primary structure comprises 100 residues: Urease subunit gamma (100 aa).

Belongs to the urease gamma subunit family. In terms of assembly, heterotrimer of UreA (gamma), UreB (beta) and UreC (alpha) subunits. Three heterotrimers associate to form the active enzyme.

It is found in the cytoplasm. It carries out the reaction urea + 2 H2O + H(+) = hydrogencarbonate + 2 NH4(+). It participates in nitrogen metabolism; urea degradation; CO(2) and NH(3) from urea (urease route): step 1/1. The polypeptide is Urease subunit gamma (Haemophilus influenzae (strain ATCC 51907 / DSM 11121 / KW20 / Rd)).